Consider the following 323-residue polypeptide: Cyclin-D5-1 (323 aa).

Disordered regions lie at residues 17–36 and 281–323; these read ESSL…KQEP and HMTP…MRRL.

The protein belongs to the cyclin family. Cyclin D subfamily.

This chain is Cyclin-D5-1 (CYCD5-1), found in Arabidopsis thaliana (Mouse-ear cress).